A 607-amino-acid polypeptide reads, in one-letter code: Vacuolar fusion protein MON1 homolog (607 aa).

The segment covering 1–14 has biased composition (low complexity); the sequence is MATSDSRSSPSSSD. Disordered regions lie at residues 1-173 and 463-486; these read MATS…DDAS and PIDR…DISV. The segment covering 21–55 has biased composition (polar residues); that stretch reads NPSSDPETNSERVQSQLESMNLSQPSEVSDGSHTE.

Belongs to the MON1/SAND family. As to quaternary structure, interacts with CCZ1A, CCZ1B and RABF2B. In terms of tissue distribution, widely expressed at stable levels.

It localises to the endosome. The protein localises to the prevacuolar compartment. In terms of biological role, plays an important role in membrane trafficking through the secretory apparatus. In complex with CCZ1, acts as a guanine exchange factor (GEF) for RABG3F of the Rab7 protein family. Promotes the exchange of GDP to GTP, converting RABG3F from an inactive GDP-bound form into an active GTP-bound form. The RABG3F active form is involved in protein trafficking from prevacuolar compartments (PVCs) to vacuoles. May serve as a linker between Rab5 and Rab7 protein families in PVCs and mediate PVC maturation. This chain is Vacuolar fusion protein MON1 homolog, found in Arabidopsis thaliana (Mouse-ear cress).